A 310-amino-acid chain; its full sequence is Methionyl-tRNA formyltransferase (310 aa).

110–113 (SLLP) contacts (6S)-5,6,7,8-tetrahydrofolate.

This sequence belongs to the Fmt family.

The catalysed reaction is L-methionyl-tRNA(fMet) + (6R)-10-formyltetrahydrofolate = N-formyl-L-methionyl-tRNA(fMet) + (6S)-5,6,7,8-tetrahydrofolate + H(+). Its function is as follows. Attaches a formyl group to the free amino group of methionyl-tRNA(fMet). The formyl group appears to play a dual role in the initiator identity of N-formylmethionyl-tRNA by promoting its recognition by IF2 and preventing the misappropriation of this tRNA by the elongation apparatus. This is Methionyl-tRNA formyltransferase from Clostridium acetobutylicum (strain ATCC 824 / DSM 792 / JCM 1419 / IAM 19013 / LMG 5710 / NBRC 13948 / NRRL B-527 / VKM B-1787 / 2291 / W).